The primary structure comprises 108 residues: uncharacterized protein (108 aa).

Residues 1-10 (MDMLHNKCSD) show a composition bias toward basic and acidic residues. Positions 1 to 27 (MDMLHNKCSDAIKSTSNSNLSNEVDKQ) are disordered. Over residues 12 to 22 (IKSTSNSNLSN) the composition is skewed to polar residues.

This is an uncharacterized protein from Saccharomyces cerevisiae (strain ATCC 204508 / S288c) (Baker's yeast).